Here is a 40-residue protein sequence, read N- to C-terminus: Large ribosomal subunit protein bL36B (40 aa).

The protein belongs to the bacterial ribosomal protein bL36 family.

The sequence is that of Large ribosomal subunit protein bL36B from Leifsonia xyli subsp. xyli (strain CTCB07).